Consider the following 108-residue polypeptide: Mitochondrial pyruvate carrier 3 (108 aa).

The next 3 membrane-spanning stretches (helical) occupy residues 19-35 (IHFW…IANI), 51-67 (IVIT…STVI), and 74-90 (LFSV…YQLT).

Belongs to the mitochondrial pyruvate carrier (MPC) (TC 2.A.105) family. In terms of tissue distribution, abundant in leaf and particularly in the guard cells.

The protein localises to the mitochondrion. The protein resides in the mitochondrion inner membrane. Functionally, mediates the uptake of pyruvate into mitochondria. Negatively regulates ABA-induced guard cell signaling and mediates drought stress responses. The protein is Mitochondrial pyruvate carrier 3 of Arabidopsis thaliana (Mouse-ear cress).